Reading from the N-terminus, the 186-residue chain is Ribosome-recycling factor (186 aa).

This sequence belongs to the RRF family.

Its subcellular location is the cytoplasm. Its function is as follows. Responsible for the release of ribosomes from messenger RNA at the termination of protein biosynthesis. May increase the efficiency of translation by recycling ribosomes from one round of translation to another. This chain is Ribosome-recycling factor, found in Amoebophilus asiaticus (strain 5a2).